Consider the following 234-residue polypeptide: Small ribosomal subunit protein uS3 (234 aa).

In terms of domain architecture, KH type-2 spans 39-107 (IRKMLKERLK…EVHLNLVEVR (69 aa)). Over residues 215–227 (QERRLQESGEQRA) the composition is skewed to basic and acidic residues. The interval 215-234 (QERRLQESGEQRARSGRQAA) is disordered.

Belongs to the universal ribosomal protein uS3 family. As to quaternary structure, part of the 30S ribosomal subunit. Forms a tight complex with proteins S10 and S14.

Functionally, binds the lower part of the 30S subunit head. Binds mRNA in the 70S ribosome, positioning it for translation. In Maricaulis maris (strain MCS10) (Caulobacter maris), this protein is Small ribosomal subunit protein uS3.